The chain runs to 183 residues: Peptide deformylase-like (183 aa).

Residue E140 is part of the active site.

Belongs to the polypeptide deformylase family.

This is Peptide deformylase-like from Rickettsia conorii (strain ATCC VR-613 / Malish 7).